The sequence spans 651 residues: Nucleolin (651 aa).

Residues methionine 1–glutamine 11 show a composition bias toward low complexity. The segment at methionine 1–serine 230 is disordered. Residues glutamate 26–glutamate 45 are compositionally biased toward acidic residues. Over residues lysine 54–lysine 79 the composition is skewed to low complexity. Acidic residues predominate over residues serine 89–glutamate 101. A compositionally biased stretch (basic residues) spans isoleucine 106–valine 116. Composition is skewed to acidic residues over residues serine 122–glutamate 134, serine 155–methionine 168, and alanine 183–glutamine 204. A Phosphoserine modification is found at serine 155. Residues proline 219–threonine 228 are compositionally biased toward basic and acidic residues. RRM domains are found at residues leucine 233–alanine 309, arginine 325–glutamate 399, lysine 415–glycine 488, and lysine 503–proline 578. The interval aspartate 574 to aspartate 651 is disordered. A compositionally biased stretch (gly residues) spans glycine 585–glycine 644.

It localises to the nucleus. It is found in the nucleolus. Its function is as follows. Nucleolin is the major nucleolar protein of growing eukaryotic cells. It is found associated with intranucleolar chromatin and pre-ribosomal particles. It induces chromatin decondensation by binding to histone H1. It is thought to play a role in pre-rRNA transcription and ribosome assembly. The protein is Nucleolin (ncl) of Xenopus laevis (African clawed frog).